The following is a 506-amino-acid chain: Serine/threonine-protein kinase D6PKL1 (506 aa).

A disordered region spans residues Met-1 to Lys-96. Basic and acidic residues predominate over residues Glu-12–Pro-23. A compositionally biased stretch (polar residues) spans Glu-24–Lys-54. The span at Thr-55–Gln-67 shows a compositional bias: basic and acidic residues. A compositionally biased stretch (low complexity) spans Ser-77–Ser-92. One can recognise a Protein kinase domain in the interval Phe-123–Phe-456. ATP contacts are provided by residues Leu-129–Val-137 and Lys-152. The Proton acceptor role is filled by Asp-248. A disordered region spans residues Pro-475–Ser-495. The segment covering Ser-480–Ser-492 has biased composition (low complexity).

The protein belongs to the protein kinase superfamily. AGC Ser/Thr protein kinase family.

The protein localises to the cell membrane. It carries out the reaction L-seryl-[protein] + ATP = O-phospho-L-seryl-[protein] + ADP + H(+). It catalyses the reaction L-threonyl-[protein] + ATP = O-phospho-L-threonyl-[protein] + ADP + H(+). Protein kinase that regulates the auxin transport activity of PIN auxin efflux facilitators by direct phosphorylation. D6PK-mediated PIN phosphorylation promotes auxin transport in the hypocotyl and this is a prerequisite for PHOT1-dependent hypocotyl bending. The sequence is that of Serine/threonine-protein kinase D6PKL1 (D6PKL1) from Arabidopsis thaliana (Mouse-ear cress).